Here is a 415-residue protein sequence, read N- to C-terminus: Gamma-glutamyl phosphate reductase (415 aa).

It belongs to the gamma-glutamyl phosphate reductase family.

The protein localises to the cytoplasm. The catalysed reaction is L-glutamate 5-semialdehyde + phosphate + NADP(+) = L-glutamyl 5-phosphate + NADPH + H(+). It functions in the pathway amino-acid biosynthesis; L-proline biosynthesis; L-glutamate 5-semialdehyde from L-glutamate: step 2/2. Its function is as follows. Catalyzes the NADPH-dependent reduction of L-glutamate 5-phosphate into L-glutamate 5-semialdehyde and phosphate. The product spontaneously undergoes cyclization to form 1-pyrroline-5-carboxylate. This chain is Gamma-glutamyl phosphate reductase, found in Salmonella dublin (strain CT_02021853).